The primary structure comprises 722 residues: MAVRERAAAAMAALERRVPSLDDFAGQSWSSWVERADLPAADGAELEESSKNTKKLDAMTLIKEDMSIFGHCPAHDDFYLVVCNHCSQVVKPQAFQKHCERRHGPLSKLYGRAPPPPPAPASSQKCHVVNGQGPACRAPGSTKTSSREKGQGSRSRGHQPPEKTQKDNLCQPGGLTKDSPGKPPMAPPSKEPPGRENIEIIPSEGSSHWAEGSPPEKEPSGTRLPPKTHRKMARKECDLNRQCGVINPETKKICTRLLTCKIHSVHQRREVQGRAKDFDVLVAELKANSRKGESPKEKSPGRKEQVLERPSQELPSSVQVVAAVAAPSSTFSVRAKQTYPYCALPRSRASSESELDDEGPCGGDGDPGLFPFPMPRGGTQASSEESEEEGTSDDLHPPPDCHYATRPPRPQAFCTFGSRLVSPGCYVFSRRLDRFCSALSSMLERHLSTHMWKKIPPAAEPPAHLVNSPLSAPLSPSSTGTCPRLPGPTLRPACPASMPPTKDNLVPSYPAGSPSVAAACSQAECMGGSQAITSPLPANTPSPSFSKLPPSKASKSSKGKDGVEVEAPSRKRKLSPGPTTLKRTCILEPTGKGKPSGCRGLSAKTKTALSMGLNGTMGPRVKRAGPLDCRGSPHQLPTPVKASQLENRGAAGHPAKALPTNCLSEEEVAKKRKNLATYCRPVKAKHCQAGAPADVACSVRRKKPGPALAFEEKCSTLKSKAH.

Disordered stretches follow at residues 106–228 (LSKL…PPKT), 288–317 (NSRK…LPSS), 347–403 (SRAS…DCHY), and 531–600 (AITS…GCRG). A compositionally biased stretch (pro residues) spans 181 to 191 (GKPPMAPPSKE). The region spanning 230 to 297 (RKMARKECDL…NSRKGESPKE (68 aa)) is the SCA7 domain. The segment covering 290 to 311 (RKGESPKEKSPGRKEQVLERPS) has biased composition (basic and acidic residues). The span at 541 to 556 (PSPSFSKLPPSKASKS) shows a compositional bias: low complexity. Residues 558–569 (KGKDGVEVEAPS) are compositionally biased toward basic and acidic residues. Residue S575 is modified to Phosphoserine.

This Homo sapiens (Human) protein is Ataxin-7-like protein 2 (ATXN7L2).